The following is a 35-amino-acid chain: Photosystem II reaction center protein T (35 aa).

The chain crosses the membrane as a helical span at residues Ala3–Phe23.

This sequence belongs to the PsbT family. As to quaternary structure, PSII is composed of 1 copy each of membrane proteins PsbA, PsbB, PsbC, PsbD, PsbE, PsbF, PsbH, PsbI, PsbJ, PsbK, PsbL, PsbM, PsbT, PsbY, PsbZ, Psb30/Ycf12, at least 3 peripheral proteins of the oxygen-evolving complex and a large number of cofactors. It forms dimeric complexes.

It localises to the plastid. The protein resides in the chloroplast thylakoid membrane. Functionally, found at the monomer-monomer interface of the photosystem II (PS II) dimer, plays a role in assembly and dimerization of PSII. PSII is a light-driven water plastoquinone oxidoreductase, using light energy to abstract electrons from H(2)O, generating a proton gradient subsequently used for ATP formation. In Bassia hyssopifolia (Fivehorn smotherweed), this protein is Photosystem II reaction center protein T.